Reading from the N-terminus, the 928-residue chain is DNA mismatch repair protein MutS (928 aa).

613–620 (GPNMAGKS) provides a ligand contact to ATP. The span at 854 to 872 (KAKSNKDDHRIDEKTENSS) shows a compositional bias: basic and acidic residues. Positions 854–880 (KAKSNKDDHRIDEKTENSSKKHKNKDS) are disordered.

Belongs to the DNA mismatch repair MutS family.

This protein is involved in the repair of mismatches in DNA. It is possible that it carries out the mismatch recognition step. This protein has a weak ATPase activity. The sequence is that of DNA mismatch repair protein MutS from Clostridium beijerinckii (strain ATCC 51743 / NCIMB 8052) (Clostridium acetobutylicum).